The primary structure comprises 1196 residues: DNA-directed RNA polymerase subunit beta (1196 aa).

It belongs to the RNA polymerase beta chain family. As to quaternary structure, the RNAP catalytic core consists of 2 alpha, 1 beta, 1 beta' and 1 omega subunit. When a sigma factor is associated with the core the holoenzyme is formed, which can initiate transcription.

The enzyme catalyses RNA(n) + a ribonucleoside 5'-triphosphate = RNA(n+1) + diphosphate. DNA-dependent RNA polymerase catalyzes the transcription of DNA into RNA using the four ribonucleoside triphosphates as substrates. The chain is DNA-directed RNA polymerase subunit beta from Lactococcus lactis subsp. lactis (strain IL1403) (Streptococcus lactis).